A 374-amino-acid chain; its full sequence is C-X-C chemokine receptor type 5 (374 aa).

Over 1-57 (MNSPISLDMGAITYNMDDLYKELAIYSNSTEIPLQDSIFCSTEEGPLLTSFKTIFMP) the chain is Extracellular. N-linked (GlcNAc...) asparagine glycosylation occurs at Asn-28. The helical transmembrane segment at 58–78 (VAYSLIFLLGMMGNILVLVIL) threads the bilayer. Residues 79–90 (ERHRHTRSSTET) are Cytoplasmic-facing. A helical membrane pass occupies residues 91-111 (FLFHLAVADLLLVFILPFAVA). Topologically, residues 112 to 126 (EGSVGWVLGTFLCKT) are extracellular. An intrachain disulfide couples Cys-124 to Cys-204. Residues 127–147 (VIALHKINFYCSSLLLACIAV) form a helical membrane-spanning segment. Over 148-169 (DRYLAIVHAVHAYRRRRLLSIH) the chain is Cytoplasmic. The helical transmembrane segment at 170-190 (ITCSTIWLAGFLFALPELLFA) threads the bilayer. Over 191–221 (KVVQPHNNESLPQCIFSQENEAETRAWFASR) the chain is Extracellular. N-linked (GlcNAc...) asparagine glycosylation occurs at Asn-198. A helical transmembrane segment spans residues 222-242 (FLYHTGGFLLPMLVMAWCYVG). Over 243–261 (VVHRLLQAQRRPQRQKAVR) the chain is Cytoplasmic. Residues 262–282 (VAILVTSIFLLCWSPYHIVIF) traverse the membrane as a helical segment. Topologically, residues 283 to 306 (LDTLERLKAVNSSCELSGYLSVAI) are extracellular. A helical membrane pass occupies residues 307–327 (TLCEFLGLAHCCLNPMLYTFA). Residues 328-374 (GVKFRSDLSRLLTKLGCAGPASLCQLFPGWRKSSLSESENATSLTTF) are Cytoplasmic-facing.

It belongs to the G-protein coupled receptor 1 family. Expressed in neuronal and lymphatic tissue.

It is found in the cell membrane. Cytokine receptor that binds to B-lymphocyte chemoattractant (BLC). Involved in B-cell migration into B-cell follicles of spleen and Peyer patches but not into those of mesenteric or peripheral lymph nodes. This chain is C-X-C chemokine receptor type 5 (Cxcr5), found in Rattus norvegicus (Rat).